The chain runs to 275 residues: Glutamate racemase (275 aa).

Substrate contacts are provided by residues 12 to 13 and 44 to 45; these read DS and YG. The active-site Proton donor/acceptor is the cysteine 75. 76–77 contributes to the substrate binding site; the sequence is NT. Cysteine 185 (proton donor/acceptor) is an active-site residue. 186-187 contributes to the substrate binding site; it reads TH.

The protein belongs to the aspartate/glutamate racemases family.

It catalyses the reaction L-glutamate = D-glutamate. Its pathway is cell wall biogenesis; peptidoglycan biosynthesis. Its function is as follows. Provides the (R)-glutamate required for cell wall biosynthesis. In Mycobacterium avium (strain 104), this protein is Glutamate racemase.